A 385-amino-acid chain; its full sequence is Glutamate 5-kinase (385 aa).

K17 contacts ATP. Substrate contacts are provided by S64, D151, and N165. 185–186 lines the ATP pocket; the sequence is SD. The region spanning 291 to 367 is the PUA domain; the sequence is SGTVRVDAGA…NQIDNILGYN (77 aa).

This sequence belongs to the glutamate 5-kinase family.

It is found in the cytoplasm. It catalyses the reaction L-glutamate + ATP = L-glutamyl 5-phosphate + ADP. It functions in the pathway amino-acid biosynthesis; L-proline biosynthesis; L-glutamate 5-semialdehyde from L-glutamate: step 1/2. In terms of biological role, catalyzes the transfer of a phosphate group to glutamate to form L-glutamate 5-phosphate. The polypeptide is Glutamate 5-kinase (Methanosarcina acetivorans (strain ATCC 35395 / DSM 2834 / JCM 12185 / C2A)).